The chain runs to 537 residues: DEAD-box ATP-dependent RNA helicase 5 (537 aa).

Residues 1–97 form a disordered region; that stretch reads MAGQKQELPV…EDLGEGESEQ (97 aa). Residues 22–80 adopt a coiled-coil conformation; it reads TNKKKKKSKKNKHTEENHEVEEVPQEVTNGVEEELSNKEKKKKRKREEKESEKNKKKDV. Residues 23-33 are compositionally biased toward basic residues; the sequence is NKKKKKSKKNK. A compositionally biased stretch (basic and acidic residues) spans 68-87; the sequence is EEKESEKNKKKDVPEKKLEA. Positions 116-142 match the Q motif motif; the sequence is KTFAESNLPENVLDCCKTFEKPSPIQS. One can recognise a Helicase ATP-binding domain in the interval 145 to 324; sequence WPFLLDGRDL…QEFMDPNPIK (180 aa). 158–165 contacts ATP; that stretch reads AKTGSGKT. The short motif at 272-275 is the DEAD box element; the sequence is DEAD. A Helicase C-terminal domain is found at 349-500; that stretch reads ARDQRLIALL…VVPADLLKFG (152 aa). A Phosphoserine modification is found at S533.

It belongs to the DEAD box helicase family. DDX5/DBP2 subfamily.

The protein localises to the nucleus. Its subcellular location is the nucleolus. It catalyses the reaction ATP + H2O = ADP + phosphate + H(+). Functionally, ATP-dependent RNA helicase required for 60S ribosomal subunit synthesis. Involved in efficient pre-rRNA processing, predominantly at site A3, which is necessary for the normal formation of 25S and 5.8S rRNAs. The chain is DEAD-box ATP-dependent RNA helicase 5 (RH5) from Arabidopsis thaliana (Mouse-ear cress).